A 127-amino-acid polypeptide reads, in one-letter code: Major sperm protein isoform alpha (127 aa).

At alanine 2 the chain carries N-acetylalanine. Residues 9-126 (DINTQPSQKI…RRKNLPIEYN (118 aa)) form the MSP domain.

Forms filaments 10 nm wide, with a characteristic substructure repeating axially at 9 nm. As to expression, sperm.

The protein localises to the cell projection. Its subcellular location is the pseudopodium. It is found in the cytoplasm. It localises to the cytoskeleton. Central component in molecular interactions underlying sperm crawling. Forms an extensive filament system that extends from sperm villipoda, along the leading edge of the pseudopod. This Ascaris suum (Pig roundworm) protein is Major sperm protein isoform alpha.